The chain runs to 71 residues: UPF0434 protein Csal_1588 (71 aa).

Belongs to the UPF0434 family.

This chain is UPF0434 protein Csal_1588, found in Chromohalobacter salexigens (strain ATCC BAA-138 / DSM 3043 / CIP 106854 / NCIMB 13768 / 1H11).